A 167-amino-acid polypeptide reads, in one-letter code: Lipoprotein signal peptidase (167 aa).

A run of 3 helical transmembrane segments spans residues 7–27 (LFLL…KYWV), 61–81 (FSHW…LWLW), and 87–107 (NKFL…GNLI). Active-site residues include Asp117 and Asp136. Residues 126–146 (IFYFAIFNLADSFITLGVIVI) traverse the membrane as a helical segment.

Belongs to the peptidase A8 family.

It is found in the cell inner membrane. The enzyme catalyses Release of signal peptides from bacterial membrane prolipoproteins. Hydrolyzes -Xaa-Yaa-Zaa-|-(S,diacylglyceryl)Cys-, in which Xaa is hydrophobic (preferably Leu), and Yaa (Ala or Ser) and Zaa (Gly or Ala) have small, neutral side chains.. It functions in the pathway protein modification; lipoprotein biosynthesis (signal peptide cleavage). In terms of biological role, this protein specifically catalyzes the removal of signal peptides from prolipoproteins. This chain is Lipoprotein signal peptidase, found in Bartonella tribocorum (strain CIP 105476 / IBS 506).